Consider the following 268-residue polypeptide: Undecaprenyl-diphosphatase (268 aa).

8 helical membrane passes run 9–29 (VILG…TGHL), 47–67 (FDVL…FAKL), 83–103 (FIIG…AAGS), 107–127 (LFLF…AVLL), 144–164 (FPVL…IPGV), 184–204 (AAEF…VYDL), 218–238 (IVAV…KTFL), and 246–266 (FQLF…ALAM).

Belongs to the UppP family.

The protein localises to the cell inner membrane. The enzyme catalyses di-trans,octa-cis-undecaprenyl diphosphate + H2O = di-trans,octa-cis-undecaprenyl phosphate + phosphate + H(+). Its function is as follows. Catalyzes the dephosphorylation of undecaprenyl diphosphate (UPP). Confers resistance to bacitracin. The sequence is that of Undecaprenyl-diphosphatase from Rhodopseudomonas palustris (strain HaA2).